The following is a 232-amino-acid chain: Izumo sperm-egg fusion protein 4 (232 aa).

Residues 1-15 (MALLLCLVCLTAALA) form the signal peptide. Asparagine 24 and asparagine 219 each carry an N-linked (GlcNAc...) asparagine glycan.

The protein belongs to the Izumo family. Detected in sperm.

The protein localises to the secreted. This chain is Izumo sperm-egg fusion protein 4 (IZUMO4), found in Homo sapiens (Human).